Reading from the N-terminus, the 139-residue chain is Histone H2B.11 (139 aa).

Positions 1–39 are enriched in basic and acidic residues; sequence MAPKAEKKPAEKKPVEEKAEKKPKAEKRVPGAKEGGGEK. The segment at 1-47 is disordered; sequence MAPKAEKKPAEKKPVEEKAEKKPKAEKRVPGAKEGGGEKKGKKKAKK. An N6-acetyllysine mark is found at Lys-7 and Lys-27. Residue Lys-135 forms a Glycyl lysine isopeptide (Lys-Gly) (interchain with G-Cter in ubiquitin) linkage.

Belongs to the histone H2B family. In terms of assembly, the nucleosome is a histone octamer containing two molecules each of H2A, H2B, H3 and H4 assembled in one H3-H4 heterotetramer and two H2A-H2B heterodimers. The octamer wraps approximately 147 bp of DNA. Can be acetylated to form H2BK6ac and H2BK33ac. Post-translationally, monoubiquitinated by BRE1 to form H2BK143ub1 and deubiquitinated by UBP26. Required for heterochromatic histone H3 di- and trimethylation at H3K4me. May give a specific tag for epigenetic transcriptional activation.

Its subcellular location is the nucleus. The protein localises to the chromosome. Core component of nucleosome. Nucleosomes wrap and compact DNA into chromatin, limiting DNA accessibility to the cellular machineries which require DNA as a template. Histones thereby play a central role in transcription regulation, DNA repair, DNA replication and chromosomal stability. DNA accessibility is regulated via a complex set of post-translational modifications of histones, also called histone code, and nucleosome remodeling. This chain is Histone H2B.11 (H2B.11), found in Oryza sativa subsp. indica (Rice).